The chain runs to 179 residues: Photosystem I assembly protein Ycf4 (179 aa).

Transmembrane regions (helical) follow at residues 21–41 (LISF…YLGV) and 59–79 (IVMT…LLNI).

This sequence belongs to the Ycf4 family.

The protein localises to the plastid. It localises to the chloroplast thylakoid membrane. Its function is as follows. Seems to be required for the assembly of the photosystem I complex. This chain is Photosystem I assembly protein Ycf4, found in Rhodomonas salina (Cryptomonas salina).